The sequence spans 802 residues: Leucine--tRNA ligase (802 aa).

Positions 40–51 (PYPSGAGLHVGH) match the 'HIGH' region motif. Residues 576–580 (KMSKS) carry the 'KMSKS' region motif. K579 lines the ATP pocket.

Belongs to the class-I aminoacyl-tRNA synthetase family.

It localises to the cytoplasm. It catalyses the reaction tRNA(Leu) + L-leucine + ATP = L-leucyl-tRNA(Leu) + AMP + diphosphate. The polypeptide is Leucine--tRNA ligase (Bacillus cereus (strain ATCC 14579 / DSM 31 / CCUG 7414 / JCM 2152 / NBRC 15305 / NCIMB 9373 / NCTC 2599 / NRRL B-3711)).